Consider the following 780-residue polypeptide: Protein AMEIOTIC 1 (780 aa).

Disordered stretches follow at residues 32 to 60 and 237 to 327; these read KKKT…SPLS and APKE…RWSA. Positions 50–60 are enriched in polar residues; it reads DSTIQPRSPLS. Composition is skewed to basic and acidic residues over residues 263–291 and 309–327; these read EVKR…EGKK and RTVE…RWSA. A coiled-coil region spans residues 448 to 547; sequence VEELTEEVNG…LEEQVTYLSS (100 aa).

It is found in the nucleus. The protein resides in the chromosome. Functionally, plays a fundamental role in building the proper chromosome structure at the beginning of meiosis in male meiocytes. Required for the transition from leptotene to zygotene in meiocytes. Required for homologous chromosome pairing, and initiation and progression of meiotic recombination. Regulates meiocyte cytoskeleton organization. This chain is Protein AMEIOTIC 1, found in Zea mays (Maize).